Here is a 571-residue protein sequence, read N- to C-terminus: Putative F-box protein At5g39460 (571 aa).

The 47-residue stretch at Ala9–Gln55 folds into the F-box domain.

This chain is Putative F-box protein At5g39460, found in Arabidopsis thaliana (Mouse-ear cress).